The sequence spans 160 residues: Nucleotide-binding protein Ping_2261 (160 aa).

The protein belongs to the YajQ family.

Its function is as follows. Nucleotide-binding protein. The protein is Nucleotide-binding protein Ping_2261 of Psychromonas ingrahamii (strain DSM 17664 / CCUG 51855 / 37).